We begin with the raw amino-acid sequence, 308 residues long: Ornithine carbamoyltransferase (308 aa).

Residues 56 to 59 (STRT), Gln83, Arg107, and 134 to 137 (HPCQ) each bind carbamoyl phosphate. Residues Asn165, Asp225, and 229 to 230 (SM) each bind L-ornithine. Residues 264–265 (CL) and Arg292 each bind carbamoyl phosphate.

The protein belongs to the aspartate/ornithine carbamoyltransferase superfamily. OTCase family.

The protein localises to the cytoplasm. It carries out the reaction carbamoyl phosphate + L-ornithine = L-citrulline + phosphate + H(+). It functions in the pathway amino-acid biosynthesis; L-arginine biosynthesis; L-arginine from L-ornithine and carbamoyl phosphate: step 1/3. In terms of biological role, reversibly catalyzes the transfer of the carbamoyl group from carbamoyl phosphate (CP) to the N(epsilon) atom of ornithine (ORN) to produce L-citrulline. This Nitrobacter winogradskyi (strain ATCC 25391 / DSM 10237 / CIP 104748 / NCIMB 11846 / Nb-255) protein is Ornithine carbamoyltransferase.